We begin with the raw amino-acid sequence, 197 residues long: C-type lectin domain family 3 member A (197 aa).

A signal peptide spans 1 to 24 (MAKNGLVIYILVITLLLDQTSCHA). Disulfide bonds link C68–C78, C95–C191, and C167–C183. Positions 74-192 (FHKKCYLAAE…CHSSKRYICE (119 aa)) constitute a C-type lectin domain.

Its subcellular location is the secreted. In terms of biological role, promotes cell adhesion to laminin and fibronectin. The chain is C-type lectin domain family 3 member A (CLEC3A) from Bos taurus (Bovine).